The following is a 500-amino-acid chain: Cytochrome P450 monooxygenase acrD (500 aa).

A helical membrane pass occupies residues 13 to 32 (PYLSGTNLVWTLLLVGYIIP). Asn-210 and Asn-414 each carry an N-linked (GlcNAc...) asparagine glycan. Cys-447 serves as a coordination point for heme.

The protein belongs to the cytochrome P450 family. The cofactor is heme.

Its subcellular location is the membrane. Its pathway is secondary metabolite biosynthesis. Functionally, cytochrome P450 monooxygenase; part of the cluster that mediates the biosynthesis of acurin A, a highly reduced polyketide coupled to a serine via a peptide bond. The activities of the highly reducing polyketide synthase acrA and the nonribosomal peptide synthetase acrB are collectively responsible for the synthesis of the acurin A core structure with a heptaketide backbone produced by acrA covalently fused to a L-serine by acrB. After the formation of the PK-NRP hybrid product, it is detached from acrB by reductive release to set up the formation of the lactam ring by aldol condensation. The hydrolyase acrC then catalyzes water loss to generate a double bond in the ring. This double bond is probably reduced, which is followed by three oxidations at C-22 to generate the carboxylic acid moiety, involving probably the FAD-binding monooxygenase acrE and the cytochrome P450 monooxygenases acrD and acrF. Finally, a last methylation step performed by the O-methyltransferase acrG leads to the production of acurin A. In Aspergillus aculeatus (strain ATCC 16872 / CBS 172.66 / WB 5094), this protein is Cytochrome P450 monooxygenase acrD.